The following is a 250-amino-acid chain: Golgi SNAP receptor complex member 1 (250 aa).

N-acetylalanine is present on Ala-2. At 2–229 the chain is on the cytoplasmic side; that stretch reads AAGTSNYWED…QRINLRKRRD (228 aa). Positions 9–27 form a coiled coil; the sequence is WEDLRKQARQLENELDLKL. The segment at 37–59 is disordered; it reads YSHSGSRDGGRDRYSSDTTPLLN. A compositionally biased stretch (basic and acidic residues) spans 41 to 51; that stretch reads GSRDGGRDRYS. Residues 72–93 are a coiled coil; sequence IEIEQLLARLTGVNDKMAEYTH. Ser-141 is modified (phosphoserine). Residues 230–250 form a helical; Anchor for type IV membrane protein membrane-spanning segment; the sequence is SLILGGVIGICTILLLLYAFH.

It belongs to the GOSR1 family. As to quaternary structure, component of several multiprotein Golgi SNARE complexes. Identified in a SNARE complex with BET1, STX5 and YKT6, in a SNARE complex with BET1L, STX5 and YKT6, in a SNARE complex with STX5, GOSR2, SEC22B and BET1, and in complex with STX5 and COG3. Interacts with GABARAPL2.

Its subcellular location is the golgi apparatus membrane. Its function is as follows. Involved in transport from the ER to the Golgi apparatus as well as in intra-Golgi transport. It belongs to a super-family of proteins called t-SNAREs or soluble NSF (N-ethylmaleimide-sensitive factor) attachment protein receptor. May play a protective role against hydrogen peroxide induced cytotoxicity under glutathione depleted conditions in neuronal cells by regulating the intracellular ROS levels via inhibition of p38 MAPK (MAPK11, MAPK12, MAPK13 and MAPK14). Participates in docking and fusion stage of ER to cis-Golgi transport. Plays an important physiological role in VLDL-transport vesicle-Golgi fusion and thus in VLDL delivery to the hepatic cis-Golgi. In Mus musculus (Mouse), this protein is Golgi SNAP receptor complex member 1 (Gosr1).